A 296-amino-acid chain; its full sequence is Thioredoxin-related transmembrane protein 2 (296 aa).

The signal sequence occupies residues 1–48 (MAVLAPLIALVYSVPRLSRWLARPYYFLSALLSAAFLLVRKLPPVCES). The Extracellular segment spans residues 49 to 102 (LPTQREDGNPCDFDWREVEILMFLSAIVMMKNRRSITVEQHVGNIFMFSKVANA). Residues 103–125 (ILFFRLDIRMGLLYITLCIVFLM) traverse the membrane as a helical segment. The Cytoplasmic segment spans residues 126–296 (TCKPPLYMGP…VPDEESKKDK (171 aa)). The 138-residue stretch at 132 to 269 (YMGPEYIKYF…LYQRAKKLSK (138 aa)) folds into the Thioredoxin domain. Residues serine 211 and serine 243 each carry the phosphoserine modification. The interval 272-296 (DKIPEEQPVAAVPAAVPDEESKKDK) is disordered. Residues 277–287 (EQPVAAVPAAV) show a composition bias toward low complexity. The Di-lysine motif motif lies at 293-296 (KKDK).

In terms of assembly, monomer. Homodimer; disulfide-linked. Occurs in both reduced and oxidized monomeric form. Oxidative conditions increase homodimerization. Interacts with CANX. Interacts with ATP2A2.

It localises to the endoplasmic reticulum membrane. Its subcellular location is the mitochondrion membrane. Functionally, endoplasmic reticulum and mitochondria-associated protein that probably functions as a regulator of cellular redox state and thereby regulates protein post-translational modification, protein folding and mitochondrial activity. Indirectly regulates neuronal proliferation, migration, and organization in the developing brain. The chain is Thioredoxin-related transmembrane protein 2 (TMX2) from Bos taurus (Bovine).